Here is a 217-residue protein sequence, read N- to C-terminus: ATP-binding protein BexA (217 aa).

Positions 2 to 217 (IRVNNVCKKY…AYQYYNETQK (216 aa)) constitute an ABC transporter domain. 38–45 (GRNGAGKS) is a binding site for ATP.

It belongs to the ABC transporter superfamily.

It localises to the cell inner membrane. Functionally, putative ATP-binding protein, and an energy-coupling component of capsule polysaccharide export apparatus. This chain is ATP-binding protein BexA (bexA), found in Haemophilus influenzae.